Reading from the N-terminus, the 550-residue chain is Transcription factor 7-like 1-D (550 aa).

Positions Met1–Ser61 are interaction with CTNNB1-A. Disordered regions lie at residues Met1–Arg77, Gly182–Pro212, Trp390–Thr473, and Ala488–Ile514. 2 stretches are compositionally biased toward basic and acidic residues: residues Glu17–Pro32 and Ser52–Arg77. The interaction with AES and TLE4-A stretch occupies residues Leu109–Val311. The HMG box DNA-binding region spans Ile323–Ser391. Residues Lys406–Thr415 are compositionally biased toward basic and acidic residues. Residues Gln407–Asp550 form an interaction with CTBP-B region. Positions Ser444–Pro455 are enriched in low complexity.

It belongs to the TCF/LEF family. As to quaternary structure, interacts with csnk1e, ctnnb1-A, ctbp-B, dact1-A and gsk3b. May interact with ase and tle4-A. In terms of processing, phosphorylated. Phosphorylation by csnk1e promotes binding to ctnnb1-A while phosphorylation by gsk3b may reverse this effect.

The protein resides in the nucleus. In terms of biological role, participates in the Wnt signaling pathway. Binds to DNA and acts as a repressor in the absence of ctnnb1-A and possibly ctnnb1-B, and as an activator in the presence of these proteins. Required early in development for the establishment of the dorsal body axis in response to maternal Wnt signaling. The sequence is that of Transcription factor 7-like 1-D (tcf7l1-d) from Xenopus laevis (African clawed frog).